The sequence spans 518 residues: Fusicoccin H C-9 hydroxylase (518 aa).

Residues 12–29 form a helical membrane-spanning segment; the sequence is HLLLISTVIAVLAALIVS. Residues Asn-81 and Asn-168 are each glycosylated (N-linked (GlcNAc...) asparagine). A heme-binding site is contributed by Cys-456.

It belongs to the cytochrome P450 family. Heme serves as cofactor.

It localises to the membrane. It functions in the pathway mycotoxin biosynthesis. Cytochrome P450 monooxygenase; part of the 2 gene clusters that mediate the biosynthesis of fusicoccins, diterpene glucosides that display phytohormone-like activity and function as potent activators of plasma membrane H(+)-ATPases in plants by modifying 14-3-3 proteins and cause the plant disease constriction canker. The first step in the pathway is performed by the fusicoccadiene synthase PaFS that possesses both prenyl transferase and terpene cyclase activity, converting isopentenyl diphosphate and dimethylallyl diphosphate into geranylgeranyl diphosphate (GGDP) and successively converting GGDP into fusicocca-2,10(14)-diene, a precursor for fusicoccin H. The second step is the oxidation at the C-8 position by the cytochrome P450 monooxygenase PaP450-2 to yield fusicocca-2,10(14)-diene-8-beta-ol. The cytochrome P450 monooxygenase PaP450-1 then catalyzes the hydroxylation at the C-16 position to produce fusicocca-2,10(14)-diene-8-beta,16-diol. The dioxygenase fc-dox then catalyzes the 16-oxydation of fusicocca-2,10(14)-diene-8-beta,16-diol to yield an aldehyde (8-beta-hydroxyfusicocca-1,10(14)-dien-16-al). The short-chain dehydrogenase/reductase fc-sdr catalyzes the reduction of the aldehyde to yield fusicocca-1,10(14)-diene-8-beta,16-diol. The next step is the hydroxylation at C-9 performed by the cytochrome P450 monooxygenase PaP450-3 that leads to fusicoccin H aglycon which is glycosylated to fusicoccin H by the O-glycosyltransferase PaGT. Hydroxylation at C-12 by the cytochrome P450 monooxygenase PaP450-4 leads then to the production of fusicoccin Q and is followed by methylation by the O-methyltransferase PaMT to yield fusicoccin P. Fusicoccin P is further converted to fusicoccin J via prenylation by the O-glucose prenyltransferase PaPT. Cytochrome P450 monooxygenase PaP450-5 then performs hydroxylation at C-19 to yield dideacetyl-fusicoccin A which is acetylated to 3'-O-deacetyl-fusicoccin A by the O-acetyltransferase PaAT-2. Finally, a another acetylation by the O-acetyltransferase PaAT-1 yields fusicoccin A. In Phomopsis amygdali (Fusicoccum amygdali), this protein is Fusicoccin H C-9 hydroxylase.